The primary structure comprises 575 residues: Alpha-(1,6)-fucosyltransferase (575 aa).

At M1–R9 the chain is on the cytoplasmic side. The chain crosses the membrane as a helical; Signal-anchor for type II membrane protein span at residues W10–V30. Over R31–K575 the chain is Lumenal. 3 disulfide bridges follow: C204–C266, C212–C230, and C218–C222. Residues K206–L493 form the GT23 domain. The residue at position 278 (S278) is a Phosphoserine. The SH3-binding motif lies at P299–P305. The tract at residues R365–R366 is important for donor substrate binding. C465 and C472 are oxidised to a cystine. Positions Q502–E563 constitute an SH3 domain.

This sequence belongs to the glycosyltransferase 23 family. Post-translationally, tyrosine phosphorylated by PKDCC/VLK.

It localises to the golgi apparatus. Its subcellular location is the golgi stack membrane. It carries out the reaction N(4)-{beta-D-GlcNAc-(1-&gt;2)-alpha-D-Man-(1-&gt;3)-[beta-D-GlcNAc-(1-&gt;2)-alpha-D-Man-(1-&gt;6)]-beta-D-Man-(1-&gt;4)-beta-D-GlcNAc-(1-&gt;4)-beta-D-GlcNAc}-L-asparaginyl-[protein] + GDP-beta-L-fucose = an N(4)-{beta-D-GlcNAc-(1-&gt;2)-alpha-D-Man-(1-&gt;3)-[beta-D-GlcNAc-(1-&gt;2)-alpha-D-Man-(1-&gt;6)]-beta-D-Man-(1-&gt;4)-beta-D-GlcNAc-(1-&gt;4)-[alpha-L-Fuc-(1-&gt;6)]-beta-D-GlcNAc}-L-asparaginyl-[protein] + GDP + H(+). It participates in protein modification; protein glycosylation. Functionally, catalyzes the addition of fucose in alpha 1-6 linkage to the first GlcNAc residue, next to the peptide chains in N-glycans. The protein is Alpha-(1,6)-fucosyltransferase (Fut8) of Mus musculus (Mouse).